We begin with the raw amino-acid sequence, 600 residues long: Elongation factor 4 (600 aa).

Positions 5 to 187 (KYIRNFSIIA…AIVNKLHPPK (183 aa)) constitute a tr-type G domain. GTP contacts are provided by residues 17–22 (DHGKST) and 134–137 (NKID).

Belongs to the TRAFAC class translation factor GTPase superfamily. Classic translation factor GTPase family. LepA subfamily.

The protein localises to the cell inner membrane. It carries out the reaction GTP + H2O = GDP + phosphate + H(+). Its function is as follows. Required for accurate and efficient protein synthesis under certain stress conditions. May act as a fidelity factor of the translation reaction, by catalyzing a one-codon backward translocation of tRNAs on improperly translocated ribosomes. Back-translocation proceeds from a post-translocation (POST) complex to a pre-translocation (PRE) complex, thus giving elongation factor G a second chance to translocate the tRNAs correctly. Binds to ribosomes in a GTP-dependent manner. In Rickettsia akari (strain Hartford), this protein is Elongation factor 4.